Reading from the N-terminus, the 193-residue chain is Dephospho-CoA kinase (193 aa).

One can recognise a DPCK domain in the interval 5–193; that stretch reads IIGLTGGIAS…KKVERFCETI (189 aa). 13-18 serves as a coordination point for ATP; it reads ASGKST.

Belongs to the CoaE family.

It localises to the cytoplasm. It catalyses the reaction 3'-dephospho-CoA + ATP = ADP + CoA + H(+). It functions in the pathway cofactor biosynthesis; coenzyme A biosynthesis; CoA from (R)-pantothenate: step 5/5. Catalyzes the phosphorylation of the 3'-hydroxyl group of dephosphocoenzyme A to form coenzyme A. This Fusobacterium nucleatum subsp. nucleatum (strain ATCC 25586 / DSM 15643 / BCRC 10681 / CIP 101130 / JCM 8532 / KCTC 2640 / LMG 13131 / VPI 4355) protein is Dephospho-CoA kinase.